We begin with the raw amino-acid sequence, 1354 residues long: MSTGDSFETRFEKIDNLLRDPKSEVNSDCLLDGLDALVYDLDFPALRKNKNIDNFLSRYKDTINKIRDLRMKAEDYEVVKVIGRGAFGEVQLVRHKSTRKVYAMKLLSKFEMIKRSDSAFFWEERDIMAFANSPWVVQLFYAFQDDRYLYMVMEYMPGGDLVNLMSNYDVPEKWARFYTAEVVLALDAIHSMGFIHRDVKPDNMLLDKSGHLKLADFGTCMKMNKEGMVRCDTAVGTPDYISPEVLKSQGGDGYYGRECDWWSVGVFLYEMLVGDTPFYADSLVGTYSKIMNHKNSLTFPDDNDISKEAKNLICAFLTDREVRLGRNGVEEIKRHLFFKNDQWAWETLRDTVAPVVPDLSSDIDTSNFDDLEEDKGDEETFPIPKAFVGNQLPFVGFTYYSNRRYLPSANASENRSSSNVDKSLQESLQKTIYKLEEQLHNEMQLKDEMEQKCRTSNLKLDKIMKELDEEGNQRRNLESAVSQIEKEKMLLQHRINEYQRKVEQENEKRRNIENEVSTLKDQLEDLRKASQTSQLANEKLTQLQKQLEEANDLLRTESDTAVRLRKSHTEMSKSISQLESLNRELQERNRILENSKSQADKDYYQLQAVLEAERRDRGHDSEMIGDLQARITSLQEEVKHLKHNLERVEGERKEAQDMLNHSEKEKNNLEIDLNYKLKSIQQRLEQEVNEHKVTKARLTDKHQSIEEAKSVAMCEMEKKLKEEREAREKAENRVVETEKQCSMLDVDLKQSQQKLEHLTENKERMEDEVKNLALQLEQESNKRLLLQNELKTQAFEADNLKGLEKQMKQEINTLLEAKRLLEFELAQLTKQYRGNEGQMRELQDQLEAEQYFSTLYKTQVKELKEEIEEKNRENLRKIQELQSEKETLSTQLDLAETKAESEQLARGILEEQYFELTQESKKAASRNRQEITDKDHTVSRLEETNSVLTKDIEMLRKENEELNERMRTAEEEYKLKKEEEINNLKAAFEKNISTERTLKTQAVNKLAEIMNRKDFKIDRKKANTQDLRKKEKENRKLQLELNQEREKFNQMVVKHQKELNDMQAQLVEECTHRNELQMQLASKESDIEQLRAKLLDLSDSTSVASFPSADETDGNLPESRIEGWLSVPNRGNIKRYGWKKQYVVVSSKKILFYNDEQDKEQSSPSMVLDIDKLFHVRPVTQGDVYRAETEEIPKIFQILYANEGECRKDIEVEPVQQGEKTNFQNHKGHEFIPTLYHFPANCEACAKPLWHVFKPPPALECRRCHVKCHRDHLDKKEDLISPCKVSYDVTSARDMLLLACSQDEQKKWVTHLVKKIPKNPPSGFVRASPRTLSTRSTANQSFRKVVKNTSGKTS.

Position 2 is an N-acetylserine (Ser2). Residues Tyr76 to Phe338 enclose the Protein kinase domain. ATP-binding positions include Ile82–Val90 and Lys105. The Proton acceptor role is filled by Asp198. An AGC-kinase C-terminal domain is found at Asp341–Ala409. The segment at Phe368 to Arg727 is interaction with FHOD1. Residues Lys422–Lys692 are a coiled coil. Positions Ser479 to Thr556 constitute an REM-1 domain. The interval Glu707–Ser946 is SHROOM3 binding. In terms of domain architecture, RhoBD spans Thr949–Phe1015. Residues Leu998–Met1010 form an RHOA binding region. Positions Asn1011–Ser1102 form a coiled coil. 2 positions are modified to phosphoserine: Ser1105 and Ser1108. Positions Asn1115–Ser1354 are auto-inhibitory. The 200-residue stretch at Glu1118–Pro1317 folds into the PH domain. The Phorbol-ester/DAG-type zinc finger occupies Gly1228–Cys1283. The residue at position 1328 (Ser1328) is a Phosphoserine. A disordered region spans residues Ser1333–Ser1354.

The protein belongs to the protein kinase superfamily. AGC Ser/Thr protein kinase family. Homodimer. Interacts with RHOA (activated by GTP), RHOB, RHOC, GEM, MYLC2B, RHOE, PPP1R12A, LIMK1, LIMK2, TSG101, CHORDC1, DAPK3, PFN1 and JIP3. Interacts with FHOD1 in a Src-dependent manner. Interacts with PTEN. Interacts with ITGB1BP1 (via N-terminus and PTB domain). Interacts with SHROOM3. Mg(2+) is required as a cofactor. In terms of processing, autophosphorylated on serine and threonine residues. Post-translationally, cleaved by caspase-3 during apoptosis. This leads to constitutive activation of the kinase and membrane blebbing. Highly expressed in brain, heart, lung, liver, stomach, spleen, kidney, testis, muscle, embryo and placenta.

The protein localises to the cytoplasm. The protein resides in the cytoskeleton. It is found in the microtubule organizing center. It localises to the centrosome. Its subcellular location is the centriole. The protein localises to the golgi apparatus membrane. The protein resides in the cell projection. It is found in the bleb. It localises to the cell membrane. Its subcellular location is the lamellipodium. The protein localises to the ruffle. It carries out the reaction L-seryl-[protein] + ATP = O-phospho-L-seryl-[protein] + ADP + H(+). It catalyses the reaction L-threonyl-[protein] + ATP = O-phospho-L-threonyl-[protein] + ADP + H(+). With respect to regulation, activated by RHOA binding. Inhibited by Y-27632. Functionally, protein kinase which is a key regulator of the actin cytoskeleton and cell polarity. Involved in regulation of smooth muscle contraction, actin cytoskeleton organization, stress fiber and focal adhesion formation, neurite retraction, cell adhesion and motility via phosphorylation of DAPK3, GFAP, LIMK1, LIMK2, MYL9/MLC2, TPPP, PFN1 and PPP1R12A. Phosphorylates FHOD1 and acts synergistically with it to promote SRC-dependent non-apoptotic plasma membrane blebbing. Phosphorylates JIP3 and regulates the recruitment of JNK to JIP3 upon UVB-induced stress. Acts as a suppressor of inflammatory cell migration by regulating PTEN phosphorylation and stability. Acts as a negative regulator of VEGF-induced angiogenic endothelial cell activation. Required for centrosome positioning and centrosome-dependent exit from mitosis. Plays a role in terminal erythroid differentiation. Inhibits podocyte motility via regulation of actin cytoskeletal dynamics and phosphorylation of CFL1. Promotes keratinocyte terminal differentiation. Involved in osteoblast compaction through the fibronectin fibrillogenesis cell-mediated matrix assembly process, essential for osteoblast mineralization. May regulate closure of the eyelids and ventral body wall by inducing the assembly of actomyosin bundles. The sequence is that of Rho-associated protein kinase 1 (Rock1) from Mus musculus (Mouse).